Reading from the N-terminus, the 2588-residue chain is Histone-lysine N-methyltransferase, H3 lysine-36 specific (2588 aa).

2 positions are modified to phosphoserine: serine 110 and serine 118. 2 disordered regions span residues glycine 209 to threonine 264 and leucine 277 to glutamate 307. The span at glutamate 235 to asparagine 249 shows a compositional bias: basic and acidic residues. Positions glycine 298–glutamate 307 are enriched in polar residues. Residues serine 380 and serine 383 each carry the phosphoserine modification. Positions serine 383–isoleucine 403 are disordered. Residue lysine 802 forms a Glycyl lysine isopeptide (Lys-Gly) (interchain with G-Cter in SUMO2) linkage. Disordered regions lie at residues alanine 830–arginine 899, glutamate 947–glutamate 987, and phenylalanine 1008–asparagine 1133. Over residues glycine 855–glutamine 874 the composition is skewed to polar residues. Residues serine 881 to alanine 895 show a composition bias toward low complexity. The span at phenylalanine 1008–proline 1033 shows a compositional bias: basic and acidic residues. The segment covering proline 1054 to asparagine 1073 has biased composition (basic residues). Lysine 1237 is covalently cross-linked (Glycyl lysine isopeptide (Lys-Gly) (interchain with G-Cter in SUMO2)). The segment at alanine 1279–lysine 1324 is disordered. A Phosphoserine modification is found at serine 1408. PHD-type zinc fingers lie at residues glutamate 1441–glycine 1487, isoleucine 1488–alanine 1544, and valine 1605–glycine 1649. One can recognise a PWWP domain in the interval tyrosine 1654–glycine 1716. Positions serine 1788 to glutamine 1838 constitute an AWS domain. Positions proline 1840–asparagine 1957 constitute an SET domain. S-adenosyl-L-methionine contacts are provided by residues arginine 1850–tryptophan 1852, threonine 1892–tyrosine 1895, asparagine 1918–histidine 1919, asparagine 1963, and lysine 1969. The segment at leucine 1958–glycine 1964 is inhibits enzyme activity in the absence of bound histone. In terms of domain architecture, Post-SET spans glycine 1964 to glycine 1980. Residues valine 1989–glutamate 2010 are disordered. Over residues arginine 1995–arginine 2006 the composition is skewed to basic residues. The PHD-type 4; atypical zinc finger occupies glutamate 2016 to aspartate 2063. Disordered regions lie at residues proline 2105–glutamate 2320, lysine 2333–histidine 2423, tyrosine 2447–glycine 2521, and arginine 2560–lysine 2588. Basic and acidic residues predominate over residues arginine 2179–aspartate 2196. Residues glycine 2201–arginine 2212 show a composition bias toward polar residues. The span at proline 2213–proline 2223 shows a compositional bias: basic and acidic residues. Low complexity predominate over residues serine 2232–glutamate 2249. Residues arginine 2250–lysine 2261 are compositionally biased toward basic and acidic residues. Serine 2267 is modified (phosphoserine). Threonine 2360 is modified (phosphothreonine). Serine 2369 is subject to Phosphoserine. A Glycyl lysine isopeptide (Lys-Gly) (interchain with G-Cter in SUMO2) cross-link involves residue lysine 2509.

It belongs to the class V-like SAM-binding methyltransferase superfamily. As to quaternary structure, interacts with AR DNA- and ligand-binding domains. Interacts with the ligand-binding domains of RARA and THRA in the absence of ligand; in the presence of ligand the interaction is severely disrupted but some binding still occurs. Interacts with the ligand-binding domains of RXRA and ESRRA only in the presence of ligand. Interacts with ZNF496. As to expression, expressed in the embryo and the outer region of the uterine decidua at early post-implantation 5.5 dpc stage. Uniformly expressed in embryonic and extraembryonic tissues during gastrulation stage 7.5 dpc. Expressed differentially after stage 14.5 dpc with highest expression in proliferating cells. Enriched in the telencephalic region of the brain, spinal cord, intestinal crypt, tooth buds, thymus and salivary glands at stage 16.5 dpc. Also expressed in the ossification region of developing bones and in the periosteum.

It localises to the nucleus. Its subcellular location is the chromosome. It catalyses the reaction L-lysyl(36)-[histone H3] + 2 S-adenosyl-L-methionine = N(6),N(6)-dimethyl-L-lysyl(36)-[histone H3] + 2 S-adenosyl-L-homocysteine + 2 H(+). Its function is as follows. Histone methyltransferase that dimethylates Lys-36 of histone H3 (H3K36me2). Transcriptional intermediary factor capable of negatively influencing transcription. May also positively influence transcription. Essential for early post-implantation development. The chain is Histone-lysine N-methyltransferase, H3 lysine-36 specific from Mus musculus (Mouse).